The sequence spans 1073 residues: Guanylyl cyclase C (1073 aa).

A signal peptide spans 1-23 (MKTLLLDLALWSLLFQPGWLSFS). The Extracellular segment spans residues 24–430 (SQVSQNCHNG…PNDITGRGPQ (407 aa)). N-linked (GlcNAc...) asparagine glycosylation is found at Asn32, Asn75, Asn79, Asn195, Asn284, Asn307, Asn345, and Asn402. A helical transmembrane segment spans residues 431–454 (ILMIAVFTLTGAVVLLLLVALLML). Residues 455–1073 (RKYRKDYELR…NTTDKESTYF (619 aa)) lie on the Cytoplasmic side of the membrane. A Protein kinase domain is found at 489–749 (LKIDDDKRRD…KIETTLAKIF (261 aa)). One can recognise a Guanylate cyclase domain in the interval 824-954 (TIYFSDIVGF…DTVNTASRME (131 aa)).

This sequence belongs to the adenylyl cyclase class-4/guanylyl cyclase family. As to quaternary structure, homotrimer. Interacts via its C-terminal region with NHERF4. Interacts with the lectin chaperone VIP36. Glycosylation at Asn-75 and/or Asn-79 is required for interaction with VIP36 while glycosylation at Asn-345 and Asn-402 modulates ligand-mediated GUCY2C activation.

The protein localises to the cell membrane. It localises to the endoplasmic reticulum membrane. The catalysed reaction is GTP = 3',5'-cyclic GMP + diphosphate. Functionally, guanylyl cyclase that catalyzes synthesis of cyclic GMP (cGMP) from GTP. Receptor for the E.coli heat-stable enterotoxin; E.coli enterotoxin markedly stimulates the accumulation of cGMP in mammalian cells expressing GUCY2C. Also activated by the endogenous peptides guanylin and uroguanylin. In Homo sapiens (Human), this protein is Guanylyl cyclase C.